The primary structure comprises 156 residues: Endoribonuclease YbeY (156 aa).

Positions 115, 119, and 125 each coordinate Zn(2+).

This sequence belongs to the endoribonuclease YbeY family. It depends on Zn(2+) as a cofactor.

Its subcellular location is the cytoplasm. Its function is as follows. Single strand-specific metallo-endoribonuclease involved in late-stage 70S ribosome quality control and in maturation of the 3' terminus of the 16S rRNA. The polypeptide is Endoribonuclease YbeY (Actinobacillus succinogenes (strain ATCC 55618 / DSM 22257 / CCUG 43843 / 130Z)).